A 523-amino-acid polypeptide reads, in one-letter code: GMP synthase [glutamine-hydrolyzing] (523 aa).

In terms of domain architecture, Glutamine amidotransferase type-1 spans 8-205; the sequence is KILILDFGSQ…VVNICGCETK (198 aa). The active-site Nucleophile is the cysteine 85. Residues histidine 179 and glutamate 181 contribute to the active site. The 193-residue stretch at 206–398 folds into the GMPS ATP-PPase domain; sequence WTAENIIEDA…LGLPAEMLNR (193 aa). 233 to 239 provides a ligand contact to ATP; sequence SGGVDSS.

Homodimer.

It catalyses the reaction XMP + L-glutamine + ATP + H2O = GMP + L-glutamate + AMP + diphosphate + 2 H(+). It participates in purine metabolism; GMP biosynthesis; GMP from XMP (L-Gln route): step 1/1. Its function is as follows. Catalyzes the synthesis of GMP from XMP. This chain is GMP synthase [glutamine-hydrolyzing], found in Glaesserella parasuis serovar 5 (strain SH0165) (Haemophilus parasuis).